The chain runs to 141 residues: Nucleoside triphosphatase NudI (141 aa).

Positions 1–141 constitute a Nudix hydrolase domain; the sequence is MRQRTIVCPL…RHTLALKGLL (141 aa). The short motif at 38 to 59 is the Nudix box element; the sequence is GGVEPGERIEEALRREIREELG.

This sequence belongs to the Nudix hydrolase family. NudI subfamily. In terms of assembly, monomer. Mg(2+) serves as cofactor.

It catalyses the reaction a ribonucleoside 5'-triphosphate + H2O = a ribonucleoside 5'-phosphate + diphosphate + H(+). The catalysed reaction is a 2'-deoxyribonucleoside 5'-triphosphate + H2O = a 2'-deoxyribonucleoside 5'-phosphate + diphosphate + H(+). It carries out the reaction dUTP + H2O = dUMP + diphosphate + H(+). The enzyme catalyses dTTP + H2O = dTMP + diphosphate + H(+). It catalyses the reaction dCTP + H2O = dCMP + diphosphate + H(+). Catalyzes the hydrolysis of nucleoside triphosphates, with a preference for pyrimidine deoxynucleoside triphosphates (dUTP, dTTP and dCTP). In Salmonella heidelberg (strain SL476), this protein is Nucleoside triphosphatase NudI.